The sequence spans 914 residues: Coatomer subunit beta' (914 aa).

WD repeat units follow at residues 13 to 54 (SRSD…KDFE), 55 to 94 (VCDV…KVHS), 97 to 136 (AHSD…ACQR), 140 to 180 (GHTH…ANFT), 183 to 224 (GHEK…CVQT), 227 to 266 (GHAQ…LETC), and 352 to 390 (ACEI…NKAF).

It belongs to the WD repeat COPB2 family. As to quaternary structure, oligomeric complex that consists of at least the alpha, beta, beta', gamma, delta, epsilon and zeta subunits.

The protein resides in the cytoplasm. It localises to the golgi apparatus membrane. It is found in the cytoplasmic vesicle. Its subcellular location is the COPI-coated vesicle membrane. In terms of biological role, the coatomer is a cytosolic protein complex that binds to dilysine motifs and reversibly associates with Golgi non-clathrin-coated vesicles, which further mediate biosynthetic protein transport from the ER, via the Golgi up to the trans Golgi network. Coatomer complex is required for budding from Golgi membranes, and is essential for the retrograde Golgi-to-ER transport of dilysine-tagged proteins. In Drosophila melanogaster (Fruit fly), this protein is Coatomer subunit beta'.